We begin with the raw amino-acid sequence, 188 residues long: NADH-quinone oxidoreductase subunit B (188 aa).

Residues C67, C68, C132, and C162 each coordinate [4Fe-4S] cluster.

The protein belongs to the complex I 20 kDa subunit family. As to quaternary structure, NDH-1 is composed of 14 different subunits. Subunits NuoB, C, D, E, F, and G constitute the peripheral sector of the complex. It depends on [4Fe-4S] cluster as a cofactor.

The protein localises to the cell inner membrane. The enzyme catalyses a quinone + NADH + 5 H(+)(in) = a quinol + NAD(+) + 4 H(+)(out). Its function is as follows. NDH-1 shuttles electrons from NADH, via FMN and iron-sulfur (Fe-S) centers, to quinones in the respiratory chain. Couples the redox reaction to proton translocation (for every two electrons transferred, four hydrogen ions are translocated across the cytoplasmic membrane), and thus conserves the redox energy in a proton gradient. In Maricaulis maris (strain MCS10) (Caulobacter maris), this protein is NADH-quinone oxidoreductase subunit B.